The sequence spans 109 residues: Lipoprotein BsmA (109 aa).

An N-terminal signal peptide occupies residues 1–24 (MVSRKRNSVIYRFASLLLVLMLSA). Residue C25 is the site of N-palmitoyl cysteine attachment. A lipid anchor (S-diacylglycerol cysteine) is attached at C25.

This sequence belongs to the BhsA/McbA family.

The protein localises to the cell membrane. Functionally, involved in protection of biofilms against oxidative stress. The sequence is that of Lipoprotein BsmA (bsmA) from Escherichia coli (strain K12).